A 223-amino-acid polypeptide reads, in one-letter code: Putative 3-methyladenine DNA glycosylase (223 aa).

It belongs to the DNA glycosylase MPG family.

The sequence is that of Putative 3-methyladenine DNA glycosylase from Pseudomonas savastanoi pv. phaseolicola (strain 1448A / Race 6) (Pseudomonas syringae pv. phaseolicola (strain 1448A / Race 6)).